Consider the following 209-residue polypeptide: Large ribosomal subunit protein uL3 (209 aa).

Belongs to the universal ribosomal protein uL3 family. As to quaternary structure, part of the 50S ribosomal subunit. Forms a cluster with proteins L14 and L19.

In terms of biological role, one of the primary rRNA binding proteins, it binds directly near the 3'-end of the 23S rRNA, where it nucleates assembly of the 50S subunit. The polypeptide is Large ribosomal subunit protein uL3 (Desulfotalea psychrophila (strain LSv54 / DSM 12343)).